We begin with the raw amino-acid sequence, 200 residues long: Phosphatidylethanolamine N-methyltransferase B (200 aa).

At 1 to 8 (MEKGLSSD) the chain is on the lumenal side. Positions 9-29 (LIIAFVAIVLHVVNYNVTAQF) form an intramembrane region, helical. Residues 30 to 39 (EYKTRYFTKL) lie on the Lumenal side of the membrane. A helical membrane pass occupies residues 40–58 (IGRNAIYYYAVFLIISALI). Topologically, residues 59 to 86 (RDHFINVAVLSDKDSIILFPTEIANMIG) are cytoplasmic. A helical transmembrane segment spans residues 87 to 107 (DSCFIFGILLNIWTLKALGIK). 91-93 (IFG) provides a ligand contact to S-adenosyl-L-methionine. Residues 108 to 150 (GMYNGDSFGHIMDSPVTGGPYQFFSDPQYVGTTIAALGVAIRN) lie on the Lumenal side of the membrane. The chain crosses the membrane as a helical span at residues 151–171 (QSIYGFLCTILVGVVFYISAT). At 172 to 200 (FVETPHLKNIYSNRSYSKINFKNLKSLKN) the chain is on the cytoplasmic side. Residue 174 to 175 (ET) coordinates S-adenosyl-L-methionine.

Belongs to the class VI-like SAM-binding methyltransferase superfamily. PEMT/PEM2 methyltransferase family.

Its subcellular location is the endoplasmic reticulum membrane. The protein localises to the mitochondrion membrane. The enzyme catalyses a 1,2-diacyl-sn-glycero-3-phospho-N-methylethanolamine + S-adenosyl-L-methionine = a 1,2-diacyl-sn-glycero-3-phospho-N,N-dimethylethanolamine + S-adenosyl-L-homocysteine + H(+). It catalyses the reaction a 1,2-diacyl-sn-glycero-3-phospho-N,N-dimethylethanolamine + S-adenosyl-L-methionine = a 1,2-diacyl-sn-glycero-3-phosphocholine + S-adenosyl-L-homocysteine + H(+). It carries out the reaction a 1,2-diacyl-sn-glycero-3-phosphoethanolamine + S-adenosyl-L-methionine = a 1,2-diacyl-sn-glycero-3-phospho-N-methylethanolamine + S-adenosyl-L-homocysteine + H(+). It participates in phospholipid metabolism; phosphatidylcholine biosynthesis. Its function is as follows. Catalyzes the three sequential steps of the methylation pathway of phosphatidylcholine biosynthesis, the SAM-dependent methylation of phosphatidylethanolamine (PE) to phosphatidylmonomethylethanolamine (PMME), PMME to phosphatidyldimethylethanolamine (PDME), and PDME to phosphatidylcholine (PC). The sequence is that of Phosphatidylethanolamine N-methyltransferase B (pemtB) from Dictyostelium discoideum (Social amoeba).